We begin with the raw amino-acid sequence, 385 residues long: uncharacterized protein (385 aa).

The protein belongs to the peptidase M20 family.

This is an uncharacterized protein from Staphylococcus saprophyticus subsp. saprophyticus (strain ATCC 15305 / DSM 20229 / NCIMB 8711 / NCTC 7292 / S-41).